The following is a 174-amino-acid chain: ATP-dependent protease subunit HslV (174 aa).

Residue threonine 2 is part of the active site. Na(+) contacts are provided by alanine 157, cysteine 160, and threonine 163.

It belongs to the peptidase T1B family. HslV subfamily. A double ring-shaped homohexamer of HslV is capped on each side by a ring-shaped HslU homohexamer. The assembly of the HslU/HslV complex is dependent on binding of ATP.

Its subcellular location is the cytoplasm. It catalyses the reaction ATP-dependent cleavage of peptide bonds with broad specificity.. With respect to regulation, allosterically activated by HslU binding. Its function is as follows. Protease subunit of a proteasome-like degradation complex believed to be a general protein degrading machinery. The sequence is that of ATP-dependent protease subunit HslV from Shewanella baltica (strain OS195).